Here is a 451-residue protein sequence, read N- to C-terminus: UPF0210 protein lmo0534 (451 aa).

It belongs to the UPF0210 family. As to quaternary structure, homodimer.

This Listeria monocytogenes serovar 1/2a (strain ATCC BAA-679 / EGD-e) protein is UPF0210 protein lmo0534.